We begin with the raw amino-acid sequence, 517 residues long: Crotonobetaine/carnitine--CoA ligase (517 aa).

It belongs to the ATP-dependent AMP-binding enzyme family.

It catalyses the reaction 4-(trimethylamino)butanoate + ATP + CoA = 4-(trimethylamino)butanoyl-CoA + AMP + diphosphate. The enzyme catalyses crotonobetaine + ATP + CoA = crotonobetainyl-CoA + AMP + diphosphate. The catalysed reaction is (R)-carnitine + ATP + CoA = (R)-carnitinyl-CoA + AMP + diphosphate. Its pathway is amine and polyamine metabolism; carnitine metabolism. Functionally, catalyzes the transfer of CoA to carnitine, generating the initial carnitinyl-CoA needed for the CaiB reaction cycle. Also has activity toward crotonobetaine and gamma-butyrobetaine. This chain is Crotonobetaine/carnitine--CoA ligase, found in Salmonella paratyphi B (strain ATCC BAA-1250 / SPB7).